The primary structure comprises 679 residues: Methionine--tRNA ligase (679 aa).

The short motif at 15 to 25 (PYANGPVHIGH) is the 'HIGH' region element. Zn(2+) contacts are provided by Cys147, Cys150, Cys160, and Cys163. The 'KMSKS' region motif lies at 332 to 336 (KISTS). Thr335 serves as a coordination point for ATP. One can recognise a tRNA-binding domain in the interval 578–679 (DFMKLDIRVG…REVKPGSEVK (102 aa)).

Belongs to the class-I aminoacyl-tRNA synthetase family. MetG type 1 subfamily. Homodimer. Zn(2+) serves as cofactor.

It is found in the cytoplasm. It catalyses the reaction tRNA(Met) + L-methionine + ATP = L-methionyl-tRNA(Met) + AMP + diphosphate. Is required not only for elongation of protein synthesis but also for the initiation of all mRNA translation through initiator tRNA(fMet) aminoacylation. This Bacteroides fragilis (strain ATCC 25285 / DSM 2151 / CCUG 4856 / JCM 11019 / LMG 10263 / NCTC 9343 / Onslow / VPI 2553 / EN-2) protein is Methionine--tRNA ligase.